Reading from the N-terminus, the 283-residue chain is 4-diphosphocytidyl-2-C-methyl-D-erythritol kinase (283 aa).

Lys-11 is an active-site residue. Residue 94-104 (PVAAGLAGGSA) participates in ATP binding. Residue Asp-136 is part of the active site.

It belongs to the GHMP kinase family. IspE subfamily.

It catalyses the reaction 4-CDP-2-C-methyl-D-erythritol + ATP = 4-CDP-2-C-methyl-D-erythritol 2-phosphate + ADP + H(+). The protein operates within isoprenoid biosynthesis; isopentenyl diphosphate biosynthesis via DXP pathway; isopentenyl diphosphate from 1-deoxy-D-xylulose 5-phosphate: step 3/6. Its function is as follows. Catalyzes the phosphorylation of the position 2 hydroxy group of 4-diphosphocytidyl-2C-methyl-D-erythritol. The protein is 4-diphosphocytidyl-2-C-methyl-D-erythritol kinase of Acetivibrio thermocellus (strain ATCC 27405 / DSM 1237 / JCM 9322 / NBRC 103400 / NCIMB 10682 / NRRL B-4536 / VPI 7372) (Clostridium thermocellum).